A 222-amino-acid polypeptide reads, in one-letter code: MKQKYVIIVAGGNGLRMKATIPKQFLLLKGKPILMHTIEAFYRYDTDIHIILVLSEKQKTYWTSLCQQYNFKIDHHTIEGGITRFYSVKNGLFSVKKNCLVAVHDGVRPLVREKLIDNAFKMAQKALAVYPAIPITDSLREITNRNNRTVNRSEFYLVQTPQVFLSDILINAYEATSSDNFTDDISVVESGKICTPTMIKGSKSNIKITTPIDLSIAEALID.

This sequence belongs to the IspD/TarI cytidylyltransferase family. IspD subfamily.

It carries out the reaction 2-C-methyl-D-erythritol 4-phosphate + CTP + H(+) = 4-CDP-2-C-methyl-D-erythritol + diphosphate. It participates in isoprenoid biosynthesis; isopentenyl diphosphate biosynthesis via DXP pathway; isopentenyl diphosphate from 1-deoxy-D-xylulose 5-phosphate: step 2/6. Its function is as follows. Catalyzes the formation of 4-diphosphocytidyl-2-C-methyl-D-erythritol from CTP and 2-C-methyl-D-erythritol 4-phosphate (MEP). In Azobacteroides pseudotrichonymphae genomovar. CFP2, this protein is 2-C-methyl-D-erythritol 4-phosphate cytidylyltransferase.